The primary structure comprises 413 residues: Arogenate dehydratase/prephenate dehydratase 6, chloroplastic (413 aa).

Residues 1–44 (MKALSSSSPILGASQPATATALIARSGRSEWQSSCAILTSKVIS) constitute a chloroplast transit peptide. One can recognise a Prephenate dehydratase domain in the interval 117–294 (RVAYQGVPGA…NVTRFVMLAR (178 aa)). Residues 308-399 (SIVFAHEKGT…SFLRVLGSYP (92 aa)) enclose the ACT domain.

In terms of tissue distribution, expressed in roots, leaves, stems, flowers and siliques.

The protein resides in the plastid. The protein localises to the chloroplast stroma. The catalysed reaction is L-arogenate + H(+) = L-phenylalanine + CO2 + H2O. It catalyses the reaction prephenate + H(+) = 3-phenylpyruvate + CO2 + H2O. The protein operates within amino-acid biosynthesis; L-phenylalanine biosynthesis; L-phenylalanine from L-arogenate: step 1/1. Its pathway is amino-acid biosynthesis; L-phenylalanine biosynthesis; phenylpyruvate from prephenate: step 1/1. Its function is as follows. Converts the prephenate produced from the shikimate-chorismate pathway into phenylalanine. Dehydratase that uses arogenate and prephenate as substrates. Utilzes more efficiently arogenate than prephenate. This Arabidopsis thaliana (Mouse-ear cress) protein is Arogenate dehydratase/prephenate dehydratase 6, chloroplastic.